The following is a 194-amino-acid chain: Adenylate kinase (194 aa).

Position 10–15 (10–15 (GAGKGT)) interacts with ATP. Positions 30-59 (STGDMLRAAVAQQSEIGKRAKAVMDAGQLV) are NMP. AMP contacts are provided by residues Thr31, Arg36, 57–59 (QLV), 85–88 (GYPR), and Gln92. The tract at residues 126-142 (SRVAETIAKGGQVRSDD) is LID. Arg127 lines the ATP pocket. AMP is bound by residues Arg139 and Arg150. Ala178 provides a ligand contact to ATP.

Belongs to the adenylate kinase family. Monomer.

The protein localises to the cytoplasm. It catalyses the reaction AMP + ATP = 2 ADP. It functions in the pathway purine metabolism; AMP biosynthesis via salvage pathway; AMP from ADP: step 1/1. In terms of biological role, catalyzes the reversible transfer of the terminal phosphate group between ATP and AMP. Plays an important role in cellular energy homeostasis and in adenine nucleotide metabolism. In Brucella anthropi (strain ATCC 49188 / DSM 6882 / CCUG 24695 / JCM 21032 / LMG 3331 / NBRC 15819 / NCTC 12168 / Alc 37) (Ochrobactrum anthropi), this protein is Adenylate kinase.